The chain runs to 685 residues: Pentatricopeptide repeat-containing protein At5g19020, mitochondrial (685 aa).

Residues 1-23 (MIKLIRFFRSRRCWVISLQARCF) constitute a mitochondrion transit peptide. 17 PPR repeats span residues 40–74 (TERA…GLDS), 75–105 (NGYI…HAKL), 106–136 (DSAS…MPER), 137–171 (SCVS…GIML), 172–206 (NEVT…KLEG), 207–237 (RVFV…MPER), 238–268 (NLVT…ITEK), 269–303 (DIVS…GMKP), 304–338 (SEVM…GFDC), 339–369 (YDFL…SVKD), 370–400 (HIAS…THDK), 401–435 (DIFS…SQVK), 437–471 (DAIT…TIPP), 472–502 (NDNL…TKNI), 506–540 (TISP…PIKP), 541–576 (NSIT…GIEP), and 577–607 (DIKH…MPVK). The interval 612–685 (IWGMLLSASR…EWSRAFSGVV (74 aa)) is type E motif; degenerate.

The protein belongs to the PPR family. PCMP-E subfamily.

It localises to the mitochondrion. The protein is Pentatricopeptide repeat-containing protein At5g19020, mitochondrial (PCMP-E42) of Arabidopsis thaliana (Mouse-ear cress).